Here is a 242-residue protein sequence, read N- to C-terminus: 3-deoxy-manno-octulosonate cytidylyltransferase (242 aa).

It belongs to the KdsB family.

The protein resides in the cytoplasm. The catalysed reaction is 3-deoxy-alpha-D-manno-oct-2-ulosonate + CTP = CMP-3-deoxy-beta-D-manno-octulosonate + diphosphate. It participates in nucleotide-sugar biosynthesis; CMP-3-deoxy-D-manno-octulosonate biosynthesis; CMP-3-deoxy-D-manno-octulosonate from 3-deoxy-D-manno-octulosonate and CTP: step 1/1. Its pathway is bacterial outer membrane biogenesis; lipopolysaccharide biosynthesis. Activates KDO (a required 8-carbon sugar) for incorporation into bacterial lipopolysaccharide in Gram-negative bacteria. The sequence is that of 3-deoxy-manno-octulosonate cytidylyltransferase from Mesorhizobium japonicum (strain LMG 29417 / CECT 9101 / MAFF 303099) (Mesorhizobium loti (strain MAFF 303099)).